The primary structure comprises 399 residues: Elongation factor Tu (399 aa).

One can recognise a tr-type G domain in the interval 10–204; that stretch reads KPHVNIGTIG…AVDASIPEPE (195 aa). The G1 stretch occupies residues 19–26; sequence GHVDHGKT. 19–26 serves as a coordination point for GTP; the sequence is GHVDHGKT. Residue T26 coordinates Mg(2+). Residues 60 to 64 are G2; sequence GITIN. Residues 81–84 are G3; that stretch reads DCPG. GTP contacts are provided by residues 81–85 and 136–139; these read DCPGH and NKCD. Residues 136 to 139 are G4; sequence NKCD. The segment at 174–176 is G5; sequence SGL.

Belongs to the TRAFAC class translation factor GTPase superfamily. Classic translation factor GTPase family. EF-Tu/EF-1A subfamily. In terms of assembly, monomer.

The protein resides in the cytoplasm. The enzyme catalyses GTP + H2O = GDP + phosphate + H(+). GTP hydrolase that promotes the GTP-dependent binding of aminoacyl-tRNA to the A-site of ribosomes during protein biosynthesis. The protein is Elongation factor Tu of Prochlorococcus marinus (strain MIT 9313).